A 426-amino-acid chain; its full sequence is Mothers against decapentaplegic homolog 7 (426 aa).

Residues 14 to 42 (WRSRAPGGEDEEEGVGGGGGGGELRGEGA) form a disordered region. Lysine 64 and lysine 70 each carry N6-acetyllysine; alternate. Residues lysine 64 and lysine 70 each participate in a glycyl lysine isopeptide (Lys-Gly) (interchain with G-Cter in ubiquitin); alternate cross-link. Residues 64-207 (KAVRGAKGHH…LSRLCELESP (144 aa)) enclose the MH1 domain. Positions 67–76 (RGAKGHHHPH) are enriched in basic residues. The disordered stretch occupies residues 67-87 (RGAKGHHHPHPPTSGAGAAGG). Residues cysteine 125, cysteine 180, cysteine 192, and histidine 197 each coordinate Zn(2+). The PY-motif motif lies at 208 to 211 (PPPY). The important for interaction with SMURF2 stretch occupies residues 208 to 217 (PPPYSRYPMD). Serine 249 is modified (phosphoserine). One can recognise an MH2 domain in the interval 261–426 (WCVVAYWEEK…CWLEVIFNSR (166 aa)).

It belongs to the dwarfin/SMAD family. In terms of assembly, interacts with COPS5. Interacts with STAMBP. Interacts with PPP1R15A. Interacts with NEDD4L. Interacts with RNF111, AXIN1 and AXIN2. Interacts with ACVR1B, SMURF1, SMURF2 and TGFBR1; SMAD7 recruits SMURF1 and SMURF2 to the TGF-beta receptor and regulates its degradation. Interacts with WWP1. Interacts with PDPK1 (via PH domain). Ubiquitinated by WWP1. Interacts with TSC22D1/TSC-22; the interaction requires TGF-beta and the interaction is inhibited by TGFBR1. Phosphorylation on Ser-249 does not affect its stability, nuclear localization or inhibitory function in TGFB signaling; however it affects its ability to regulate transcription. Phosphorylated by PDPK1. Post-translationally, ubiquitinated by WWP1. Polyubiquitinated by RNF111, which is enhanced by AXIN1 and promotes proteasomal degradation. In response to TGF-beta, ubiquitinated by SMURF1; which promotes its degradation. Ubiquitinated by ARK2C, promoting proteasomal degradation, leading to enhance the BMP-Smad signaling. In terms of processing, acetylation prevents ubiquitination and degradation mediated by SMURF1. In terms of tissue distribution, ubiquitous in various organs, with higher levels in brain and kidney.

Its subcellular location is the nucleus. It is found in the cytoplasm. Functionally, antagonist of signaling by TGF-beta (transforming growth factor) type 1 receptor superfamily members; has been shown to inhibit TGF-beta (Transforming growth factor) and activin signaling by associating with their receptors thus preventing SMAD2 access. Functions as an adapter to recruit SMURF2 to the TGF-beta receptor complex. Also acts by recruiting the PPP1R15A-PP1 complex to TGFBR1, which promotes its dephosphorylation. Positively regulates PDPK1 kinase activity by stimulating its dissociation from the 14-3-3 protein YWHAQ which acts as a negative regulator. The polypeptide is Mothers against decapentaplegic homolog 7 (Smad7) (Mus musculus (Mouse)).